The chain runs to 137 residues: Large ribosomal subunit protein uL16c (137 aa).

The disordered stretch occupies residues 1–21; it reads MLSPKKTKYRKQHRGRMKGKA.

This sequence belongs to the universal ribosomal protein uL16 family. Part of the 50S ribosomal subunit.

It is found in the plastid. Its subcellular location is the chloroplast. In Oedogonium cardiacum (Filamentous green alga), this protein is Large ribosomal subunit protein uL16c.